The chain runs to 119 residues: Acidic phospholipase A2 CM-II (119 aa).

7 disulfide bridges follow: cysteine 11/cysteine 71, cysteine 26/cysteine 118, cysteine 28/cysteine 44, cysteine 43/cysteine 99, cysteine 50/cysteine 92, cysteine 60/cysteine 85, and cysteine 78/cysteine 90. Residues phenylalanine 27, glycine 29, and glycine 31 each coordinate Ca(2+). Residue histidine 47 is part of the active site. Aspartate 48 is a Ca(2+) binding site. Aspartate 93 is a catalytic residue.

It belongs to the phospholipase A2 family. Group I subfamily. D49 sub-subfamily. It depends on Ca(2+) as a cofactor. As to expression, expressed by the venom gland.

Its subcellular location is the secreted. The catalysed reaction is a 1,2-diacyl-sn-glycero-3-phosphocholine + H2O = a 1-acyl-sn-glycero-3-phosphocholine + a fatty acid + H(+). In terms of biological role, PLA2 catalyzes the calcium-dependent hydrolysis of the 2-acyl groups in 3-sn-phosphoglycerides. The polypeptide is Acidic phospholipase A2 CM-II (Aspidelaps scutatus (Shield-nose snake)).